Consider the following 231-residue polypeptide: uncharacterized protein (231 aa).

This is an uncharacterized protein from Escherichia coli (strain K12).